We begin with the raw amino-acid sequence, 547 residues long: Glucose-6-phosphate isomerase (547 aa).

Glu354 acts as the Proton donor in catalysis. Active-site residues include His385 and Lys513.

This sequence belongs to the GPI family.

The protein localises to the cytoplasm. The enzyme catalyses alpha-D-glucose 6-phosphate = beta-D-fructose 6-phosphate. Its pathway is carbohydrate biosynthesis; gluconeogenesis. It participates in carbohydrate degradation; glycolysis; D-glyceraldehyde 3-phosphate and glycerone phosphate from D-glucose: step 2/4. Its function is as follows. Catalyzes the reversible isomerization of glucose-6-phosphate to fructose-6-phosphate. This chain is Glucose-6-phosphate isomerase, found in Endomicrobium trichonymphae.